Reading from the N-terminus, the 316-residue chain is DNA-directed RNA polymerase III subunit RPC6 (316 aa).

A2 carries the post-translational modification N-acetylalanine. Glycyl lysine isopeptide (Lys-Gly) (interchain with G-Cter in SUMO2) cross-links involve residues K5 and K7. Residues C287, C290, C296, and C307 each contribute to the [4Fe-4S] cluster site.

This sequence belongs to the eukaryotic RPC34/RPC39 RNA polymerase subunit family. Component of the RNA polymerase III complex consisting of 17 subunits: a ten-subunit horseshoe-shaped catalytic core composed of POLR3A/RPC1, POLR3B/RPC2, POLR1C/RPAC1, POLR1D/RPAC2, POLR3K/RPC10, POLR2E/RPABC1, POLR2F/RPABC2, POLR2H/RPABC3, POLR2K/RPABC4 and POLR2L/RPABC5; a mobile stalk composed of two subunits POLR3H/RPC8 and CRCP/RPC9, protruding from the core and functioning primarily in transcription initiation; and additional subunits homologous to general transcription factors of the RNA polymerase II machinery, POLR3C/RPC3-POLR3F/RPC6-POLR3G/RPC7 heterotrimer required for transcription initiation and POLR3D/RPC4-POLR3E/RPC5 heterodimer involved in both transcription initiation and termination. Directly interacts with POLR3C. Interacts with TBP and TFIIIB90 and GTF3C4. Interacts with MAF1. As part of the RNA polymerase III complex, interacts with PKP2.

It is found in the nucleus. Its function is as follows. DNA-dependent RNA polymerase catalyzes the transcription of DNA into RNA using the four ribonucleoside triphosphates as substrates. Specific peripheric component of RNA polymerase III (Pol III) which synthesizes small non-coding RNAs including 5S rRNA, snRNAs, tRNAs and miRNAs from at least 500 distinct genomic loci. Part of POLR3C/RPC3-POLR3F/RPC6-POLR3G/RPC7 heterotrimer that coordinates the dynamics of Pol III stalk and clamp modules during the transition from apo to elongation state. Pol III plays a key role in sensing and limiting infection by intracellular bacteria and DNA viruses, including varicella zoster virus. Acts as a nuclear and cytosolic DNA sensor detecting AT-rich DNA, involved in innate immune response. Can sense non-self dsDNA that serves as template for transcription into dsRNA. The non-self RNA polymerase III transcripts, such as Epstein-Barr virus-encoded RNAs (EBERs) induce type I interferon and NF-kappa-B through the RIG-I pathway. Preferentially binds double-stranded DNA (dsDNA). The polypeptide is DNA-directed RNA polymerase III subunit RPC6 (Homo sapiens (Human)).